The following is a 492-amino-acid chain: Virion host shutoff protein (492 aa).

Disordered regions lie at residues 110-130 (EEAS…SRPS), 143-165 (FAPG…GAPS), 288-307 (SQAR…LESM), and 334-369 (EDDY…PPEL). The span at 144–165 (APGDRGTRAAGPGPAAPSGAPS) shows a compositional bias: low complexity.

This sequence belongs to the herpesviridae VHS protein family. As to quaternary structure, interacts with human EIF4H, EIF4A1 and EIF4A2; interaction with eIF4AI and EIF4A2 presumably allows Vhs protein to associate with the eIF4F cap-binding complex.

It localises to the virion. Its function is as follows. Minor structural protein that acts as an endoribonuclease during lytic infection. Degrades host mRNAs in the cytoplasm by cutting them at preferred sites, including some in regions of translation initiation. Together with inhibition of host splicing by ICP27, contributes to an overall decrease in host protein synthesis. Also, after the onset of viral transcription, accelerates the turnover of viral mRNA, thereby facilitating the sequential expression of different classes of viral genes. Binds translation initiation factors eIF4H, eIF4AI, and eIF4AII, thereby may interact directly with the translation initiation complex and thus digest specifically mRNAs. Also impedes antigen presentation by major histocompatibility complex class I and class II molecules, inhibits secretion of cytokines that would otherwise recruit lymphocytes and neutrophils cells to the site of infection and blocks the activation of dendritic cells. Impedes the alpha/beta interferon-mediated response to infection. Inhibits the integrated stress response (ISR) in the infected cell, this function requires the endonuclease activity. Stress granule formation is thus inhibited, which allows protein synthesis and viral replication. This Human herpesvirus 2 (strain G) (HHV-2) protein is Virion host shutoff protein (UL41).